The chain runs to 446 residues: Phosphoglucosamine mutase (446 aa).

Serine 103 serves as the catalytic Phosphoserine intermediate. Residues serine 103, aspartate 242, aspartate 244, and aspartate 246 each contribute to the Mg(2+) site. A Phosphoserine modification is found at serine 103.

This sequence belongs to the phosphohexose mutase family. Requires Mg(2+) as cofactor. Post-translationally, activated by phosphorylation.

The catalysed reaction is alpha-D-glucosamine 1-phosphate = D-glucosamine 6-phosphate. In terms of biological role, catalyzes the conversion of glucosamine-6-phosphate to glucosamine-1-phosphate. This chain is Phosphoglucosamine mutase, found in Corynebacterium urealyticum (strain ATCC 43042 / DSM 7109).